The following is a 370-amino-acid chain: Adaptive-response sensory kinase SasA (370 aa).

One can recognise a Histidine kinase domain in the interval 152–365; sequence MVAHELRTPL…CFYLTVPVWQ (214 aa). The residue at position 155 (histidine 155) is a Phosphohistidine; by autocatalysis.

In terms of assembly, homooligomerizes. Interacts with KaiC. Participates in the KaiBC complex, whose core is composed of a KaiC homohexamer and 6 KaiB.

The enzyme catalyses ATP + protein L-histidine = ADP + protein N-phospho-L-histidine.. Member of the two-component regulatory system SasA/RpaA involved in genome-wide circadian gene expression. One of several clock output pathways. Participates in the Kai clock protein complex, the main circadian regulator in cyanobacteria, via its interaction with KaiC. KaiC enhances the autophosphorylation activity of SasA, which then transfers its phosphate group to RpaA to activate it. In addition to its output function, recruits fold-shifted KaiB (KaiB(fs)) to KaiC to cooperatively form the KaiB(6):KaiC(6) complex (independent of SasA kinase activity). Required for robustness of the circadian rhythm of gene expression and is involved in clock output, also required for adaptation to light/dark cycles. The polypeptide is Adaptive-response sensory kinase SasA (Prochlorococcus marinus (strain MIT 9313)).